The sequence spans 266 residues: Glucosamine-6-phosphate deaminase (266 aa).

Asp72 serves as the catalytic Proton acceptor; for enolization step. The For ring-opening step role is filled by Asp141. The active-site Proton acceptor; for ring-opening step is His143. Glu148 functions as the For ring-opening step in the catalytic mechanism.

This sequence belongs to the glucosamine/galactosamine-6-phosphate isomerase family. NagB subfamily. As to quaternary structure, homohexamer.

It catalyses the reaction alpha-D-glucosamine 6-phosphate + H2O = beta-D-fructose 6-phosphate + NH4(+). The protein operates within amino-sugar metabolism; N-acetylneuraminate degradation; D-fructose 6-phosphate from N-acetylneuraminate: step 5/5. With respect to regulation, allosterically activated by N-acetylglucosamine 6-phosphate (GlcNAc6P). Functionally, catalyzes the reversible isomerization-deamination of glucosamine 6-phosphate (GlcN6P) to form fructose 6-phosphate (Fru6P) and ammonium ion. The chain is Glucosamine-6-phosphate deaminase from Enterobacter sp. (strain 638).